A 708-amino-acid chain; its full sequence is Probable inactive lysine-specific demethylase JMJ19 (708 aa).

A disordered region spans residues 35–59; that stretch reads VPRDKESPRSVSRQEQTTGFGTDDK. Positions 43–54 are enriched in polar residues; sequence RSVSRQEQTTGF. In terms of domain architecture, JmjN spans 108-149; sequence APVFNPTEEEFRDTLSYISSLRDRAEPYGICCVVPPPSWKPP. Residues 293 to 454 form the JmjC domain; that stretch reads SSGWNLNSTA…HGDIAVQVNQ (162 aa). 8 residues coordinate Zn(2+): Cys544, Cys547, Cys558, Cys560, Cys567, His570, Cys575, and Cys577. The RING-type; degenerate zinc finger occupies 544 to 581; sequence CCVCLGDLYLSAVNCSCSANRYSCLNHMRKLCACPCDR. The Nuclear localization signal motif lies at 646-653; sequence TRKDVAAG. Basic and acidic residues predominate over residues 678–694; the sequence is AKETLESCSKKSNRPCD. The segment at 678–708 is disordered; the sequence is AKETLESCSKKSNRPCDNDSSEANAPKKQKQ.

Belongs to the JARID1 histone demethylase family. Expressed in inflorescences, roots, siliques, leaves and stems.

It is found in the nucleus. In Arabidopsis thaliana (Mouse-ear cress), this protein is Probable inactive lysine-specific demethylase JMJ19.